A 371-amino-acid polypeptide reads, in one-letter code: Large ribosomal subunit protein bL27m (371 aa).

Residues 1–27 (MWNPILLDTSSFSFQKHVSGVFLQVRN) constitute a mitochondrion transit peptide.

This sequence belongs to the bacterial ribosomal protein bL27 family. As to quaternary structure, component of the mitochondrial large ribosomal subunit (mt-LSU). Mature yeast 74S mitochondrial ribosomes consist of a small (37S) and a large (54S) subunit. The 37S small subunit contains a 15S ribosomal RNA (15S mt-rRNA) and 34 different proteins. The 54S large subunit contains a 21S rRNA (21S mt-rRNA) and 46 different proteins.

It is found in the mitochondrion. Component of the mitochondrial ribosome (mitoribosome), a dedicated translation machinery responsible for the synthesis of mitochondrial genome-encoded proteins, including at least some of the essential transmembrane subunits of the mitochondrial respiratory chain. The mitoribosomes are attached to the mitochondrial inner membrane and translation products are cotranslationally integrated into the membrane. This chain is Large ribosomal subunit protein bL27m (MRP7), found in Saccharomyces cerevisiae (strain ATCC 204508 / S288c) (Baker's yeast).